The sequence spans 401 residues: Golgi membrane protein 1 (401 aa).

Methionine 1 carries the post-translational modification N-acetylmethionine. At methionine 1–lysine 12 the chain is on the cytoplasmic side. A helical; Signal-anchor for type II membrane protein membrane pass occupies residues serine 13–alanine 35. Over serine 36 to leucine 401 the chain is Lumenal. A coiled-coil region spans residues valine 40–glutamate 205. N-linked (GlcNAc...) (complex) asparagine glycosylation is present at asparagine 109. N-linked (GlcNAc...) asparagine glycosylation occurs at asparagine 144. The segment at threonine 178–leucine 401 is disordered. Serine 187 carries the post-translational modification Phosphoserine. The segment covering leucine 228–proline 238 has biased composition (polar residues). 2 stretches are compositionally biased toward basic and acidic residues: residues leucine 244–threonine 255 and glutamate 264–valine 285. The span at glycine 286 to glutamate 295 shows a compositional bias: gly residues. A compositionally biased stretch (polar residues) spans glutamine 298–asparagine 312. The residue at position 309 (serine 309) is a Phosphoserine; by FAM20C. Over residues aspartate 350–serine 360 the composition is skewed to acidic residues. Positions glutamate 381–glutamate 395 are enriched in basic and acidic residues. N-linked (GlcNAc...) asparagine glycosylation is present at asparagine 398.

Belongs to the GOLM family. As to quaternary structure, interacts with DYM. In terms of processing, glycosylated. Phosphorylation sites are present in the extracellular medium. Widely expressed. Highly expressed in colon, prostate, trachea and stomach. Expressed at lower level in testis, muscle, lymphoid tissues, white blood cells and spleen. Predominantly expressed by cells of the epithelial lineage. Expressed at low level in normal liver. Expression significantly increases in virus (HBV, HCV) infected liver. Expression does not increase in liver disease due to non-viral causes (alcohol-induced liver disease, autoimmune hepatitis). Increased expression in hepatocytes appears to be a general feature of advanced liver disease. In liver tissue from patients with adult giant-cell hepatitis (GCH), it is strongly expressed in hepatocytes-derived syncytial giant cells. Constitutively expressed by biliary epithelial cells but not by hepatocytes.

The protein localises to the golgi apparatus. It is found in the cis-Golgi network membrane. Its function is as follows. Unknown. Cellular response protein to viral infection. The protein is Golgi membrane protein 1 (GOLM1) of Homo sapiens (Human).